Here is a 430-residue protein sequence, read N- to C-terminus: Enolase (430 aa).

Position 163 (Gln-163) interacts with (2R)-2-phosphoglycerate. The active-site Proton donor is Glu-205. 3 residues coordinate Mg(2+): Asp-242, Glu-287, and Asp-314. Residues Lys-339, Arg-368, Ser-369, and Lys-390 each coordinate (2R)-2-phosphoglycerate. Lys-339 functions as the Proton acceptor in the catalytic mechanism.

Belongs to the enolase family. Mg(2+) is required as a cofactor.

It is found in the cytoplasm. It localises to the secreted. The protein localises to the cell surface. It catalyses the reaction (2R)-2-phosphoglycerate = phosphoenolpyruvate + H2O. It functions in the pathway carbohydrate degradation; glycolysis; pyruvate from D-glyceraldehyde 3-phosphate: step 4/5. In terms of biological role, catalyzes the reversible conversion of 2-phosphoglycerate (2-PG) into phosphoenolpyruvate (PEP). It is essential for the degradation of carbohydrates via glycolysis. The chain is Enolase from Geobacillus kaustophilus (strain HTA426).